The primary structure comprises 629 residues: tRNA uridine 5-carboxymethylaminomethyl modification enzyme MnmG (629 aa).

FAD is bound by residues Gly-14–Gly-19, Val-126, and Ser-181. Gly-273–Phe-287 contributes to the NAD(+) binding site. Position 370 (Gln-370) interacts with FAD.

It belongs to the MnmG family. As to quaternary structure, homodimer. Heterotetramer of two MnmE and two MnmG subunits. FAD is required as a cofactor.

Its subcellular location is the cytoplasm. Functionally, NAD-binding protein involved in the addition of a carboxymethylaminomethyl (cmnm) group at the wobble position (U34) of certain tRNAs, forming tRNA-cmnm(5)s(2)U34. The sequence is that of tRNA uridine 5-carboxymethylaminomethyl modification enzyme MnmG from Bacillus cereus (strain ATCC 14579 / DSM 31 / CCUG 7414 / JCM 2152 / NBRC 15305 / NCIMB 9373 / NCTC 2599 / NRRL B-3711).